The chain runs to 1437 residues: Histone-lysine N-methyltransferase NSD3 (1437 aa).

Disordered stretches follow at residues 121 to 157 (PHEI…KLKI) and 181 to 252 (QASE…PVQP). Pro residues predominate over residues 128-139 (PSPPQPPPPPSV). A Phosphoserine modification is found at S150. Residues 154-157 (KLKI) carry the KIKL motif. Residues 187 to 201 (KSKHESRKEKRKKSN) are compositionally biased toward basic residues. The span at 202 to 248 (KHDSSRSEERKSHKIPKLEPEEQNRPNERVDTVSEKPREEPVLKEEA) shows a compositional bias: basic and acidic residues. Residues K218 and K245 each participate in a glycyl lysine isopeptide (Lys-Gly) (interchain with G-Cter in SUMO2) cross-link. In terms of domain architecture, PWWP 1 spans 270–333 (VGDLVWSKVG…EKRVREYKGH (64 aa)). Disordered stretches follow at residues 344–365 (TKQA…QRER) and 406–465 (AKKS…EPPP). K413 is covalently cross-linked (Glycyl lysine isopeptide (Lys-Gly) (interchain with G-Cter in SUMO2)). Residues 425–445 (VLNTQPEQTNAGEVASSLSST) are compositionally biased toward polar residues. A Phosphoserine modification is found at S457. Glycyl lysine isopeptide (Lys-Gly) (interchain with G-Cter in SUMO2) cross-links involve residues K502 and K532. The interval 540 to 696 (QDRLIISTPN…DSSLSRRGTG (157 aa)) is disordered. The span at 546–571 (STPNQRNEKPTQSVSSPEATSGSTGS) shows a compositional bias: polar residues. Positions 583-595 (TRSESEKSTEVVP) are enriched in basic and acidic residues. Residues S585, S587, and S590 each carry the phosphoserine modification. K628 is covalently cross-linked (Glycyl lysine isopeptide (Lys-Gly) (interchain with G-Cter in SUMO2)). S655 bears the Phosphoserine mark. Polar residues predominate over residues 682–692 (DVQSMDSSLSR). 3 PHD-type zinc fingers span residues 701–748 (DTVC…CKTG), 749–805 (QHPC…CSME), and 862–955 (VGFC…CKAG). Position 790 is an N6-acetyllysine (K790). The PWWP 2 domain maps to 960-1022 (YKQIVWVKLG…QGRVFPYVEG (63 aa)). Positions 1033-1069 (INKTFKKALEEAAKRFQELKAQRESKEALEIEKNSRK) form a coiled coil. The AWS domain maps to 1093 to 1143 (SEIPRCNCKPADENPCGLESECLNRMLQYECHPQVCPAGDRCQNQCFTKRL). Residues 1145 to 1262 (PDAEIIKTER…AGMELTFNYN (118 aa)) enclose the SET domain. Residue K1151 forms a Glycyl lysine isopeptide (Lys-Gly) (interchain with G-Cter in SUMO2) linkage. Positions 1269 to 1285 (GRTECHCGADNCSGFLG) constitute a Post-SET domain. A PHD-type 4; atypical zinc finger spans residues 1321-1368 (EDYCFQCGDGGELVMCDKKDCPKAYHLLCLNLTQPPYGKWECPWHQCD).

It belongs to the class V-like SAM-binding methyltransferase superfamily. Histone-lysine methyltransferase family. SET2 subfamily. In terms of assembly, interacts with BRD4. Interacts (via KIKL motif) with BRD3 (via NET domain). As to expression, highly expressed in brain, heart and skeletal muscle. Expressed at lower level in liver and lung.

The protein resides in the nucleus. It is found in the chromosome. The catalysed reaction is L-lysyl(4)-[histone H3] + 2 S-adenosyl-L-methionine = N(6),N(6)-dimethyl-L-lysyl(4)-[histone H3] + 2 S-adenosyl-L-homocysteine + 2 H(+). The enzyme catalyses L-lysyl(27)-[histone H3] + 2 S-adenosyl-L-methionine = N(6),N(6)-dimethyl-L-lysyl(27)-[histone H3] + 2 S-adenosyl-L-homocysteine + 2 H(+). Histone methyltransferase. Preferentially dimethylates 'Lys-4' and 'Lys-27' of histone H3 forming H3K4me2 and H3K27me2. H3 'Lys-4' methylation represents a specific tag for epigenetic transcriptional activation, while 'Lys-27' is a mark for transcriptional repression. The protein is Histone-lysine N-methyltransferase NSD3 of Homo sapiens (Human).